Reading from the N-terminus, the 404-residue chain is Probable cysteine desulfurase (404 aa).

An N6-(pyridoxal phosphate)lysine modification is found at Lys-226. Cys-363 functions as the Cysteine persulfide intermediate in the catalytic mechanism.

This sequence belongs to the class-V pyridoxal-phosphate-dependent aminotransferase family. Csd subfamily. Pyridoxal 5'-phosphate serves as cofactor.

The catalysed reaction is (sulfur carrier)-H + L-cysteine = (sulfur carrier)-SH + L-alanine. Functionally, catalyzes the removal of elemental sulfur and selenium atoms from L-cysteine, L-cystine, L-selenocysteine, and L-selenocystine to produce L-alanine. The sequence is that of Probable cysteine desulfurase (csd) from Vibrio cholerae serotype O1 (strain ATCC 39315 / El Tor Inaba N16961).